Reading from the N-terminus, the 214-residue chain is MDDLESEFNLKVVLVSFKQCLNEKEEVLLEYYLAGWRGLVRFLNSLGTIFSFISKDVVTKLQIMDQLRSGPQQEHYSSLQAMVAYEVGNQLVDLERRSRHPDSGCRTVLRLHRALRWLQLFLEGVRTSPEDARTSVLCTDSYNASLATYHPWIIRRAVTVAFCALPTRKVFLESMNVGSSEQAVEMLNEALPFIERVYNISQKLYAEHALLDLP.

Positions 56, 60, 106, 110, and 150 each coordinate an N-acylsphingoid base 1-phosphate.

This sequence belongs to the GLTP family.

It is found in the cytoplasm. It localises to the cytosol. The protein localises to the golgi apparatus. The protein resides in the trans-Golgi network membrane. Its subcellular location is the cell membrane. It is found in the endosome membrane. It localises to the nucleus outer membrane. The catalysed reaction is N-(hexadecanoyl)-sphing-4-enine-1-phosphate(in) = N-(hexadecanoyl)-sphing-4-enine-1-phosphate(out). It carries out the reaction N-(9Z-octadecenoyl)-sphing-4-enine-1-phosphate(in) = N-(9Z-octadecenoyl)-sphing-4-enine-1-phosphate(out). Its function is as follows. Mediates the intracellular transfer of ceramide-1-phosphate (C1P) between organelle membranes and the cell membrane. Required for normal structure of the Golgi stacks. Can bind phosphoceramides with a variety of aliphatic chains, but has a preference for lipids with saturated C16:0 or monounsaturated C18:1 aliphatic chains, and is inefficient with phosphoceramides containing lignoceryl (C24:0). Plays a role in the regulation of the cellular levels of ceramide-1-phosphate, and thereby contributes to the regulation of phospholipase PLA2G4A activity and the release of arachidonic acid. Has no activity with galactosylceramide, lactosylceramide, sphingomyelin, phosphatidylcholine, phosphatidic acid and ceramide. C1P transfer is stimulated by phosphatidylserine in C1P source vesicles. Regulates autophagy, inflammasome mediated IL1B and IL18 processing, and pyroptosis, but not apoptosis. The protein is Ceramide-1-phosphate transfer protein (CPTP) of Bos taurus (Bovine).